The sequence spans 436 residues: Methylenetetrahydrofolate--tRNA-(uracil-5-)-methyltransferase TrmFO (436 aa).

Residue 7–12 (GAGLAG) participates in FAD binding.

Belongs to the MnmG family. TrmFO subfamily. Requires FAD as cofactor.

It is found in the cytoplasm. The catalysed reaction is uridine(54) in tRNA + (6R)-5,10-methylene-5,6,7,8-tetrahydrofolate + NADH + H(+) = 5-methyluridine(54) in tRNA + (6S)-5,6,7,8-tetrahydrofolate + NAD(+). It carries out the reaction uridine(54) in tRNA + (6R)-5,10-methylene-5,6,7,8-tetrahydrofolate + NADPH + H(+) = 5-methyluridine(54) in tRNA + (6S)-5,6,7,8-tetrahydrofolate + NADP(+). In terms of biological role, catalyzes the folate-dependent formation of 5-methyl-uridine at position 54 (M-5-U54) in all tRNAs. This chain is Methylenetetrahydrofolate--tRNA-(uracil-5-)-methyltransferase TrmFO, found in Caldicellulosiruptor bescii (strain ATCC BAA-1888 / DSM 6725 / KCTC 15123 / Z-1320) (Anaerocellum thermophilum).